A 275-amino-acid polypeptide reads, in one-letter code: Vitamin B12-binding protein (275 aa).

Positions methionine 1 to alanine 27 are cleaved as a signal peptide. Residues arginine 31–serine 275 form the Fe/B12 periplasmic-binding domain. A cyanocob(III)alamin-binding site is contributed by tyrosine 58. Cysteine 191 and cysteine 267 are oxidised to a cystine.

The protein belongs to the BtuF family. The complex is composed of two ATP-binding proteins (BtuD), two transmembrane proteins (BtuC) and a solute-binding protein (BtuF).

It localises to the periplasm. Part of the ABC transporter complex BtuCDF involved in vitamin B12 import. Binds vitamin B12 and delivers it to the periplasmic surface of BtuC. The polypeptide is Vitamin B12-binding protein (Photorhabdus laumondii subsp. laumondii (strain DSM 15139 / CIP 105565 / TT01) (Photorhabdus luminescens subsp. laumondii)).